A 218-amino-acid polypeptide reads, in one-letter code: Ribose-5-phosphate isomerase A (218 aa).

Substrate is bound by residues 28–31, 81–84, and 94–97; these read TGST, DGAD, and KGGG. Glu-103 functions as the Proton acceptor in the catalytic mechanism. Lys-121 is a substrate binding site.

This sequence belongs to the ribose 5-phosphate isomerase family. As to quaternary structure, homodimer.

The catalysed reaction is aldehydo-D-ribose 5-phosphate = D-ribulose 5-phosphate. It participates in carbohydrate degradation; pentose phosphate pathway; D-ribose 5-phosphate from D-ribulose 5-phosphate (non-oxidative stage): step 1/1. Its function is as follows. Catalyzes the reversible conversion of ribose-5-phosphate to ribulose 5-phosphate. The chain is Ribose-5-phosphate isomerase A from Thioalkalivibrio sulfidiphilus (strain HL-EbGR7).